A 91-amino-acid polypeptide reads, in one-letter code: Probable Fe(2+)-trafficking protein (91 aa).

Belongs to the Fe(2+)-trafficking protein family. As to quaternary structure, monomer.

Functionally, could be a mediator in iron transactions between iron acquisition and iron-requiring processes, such as synthesis and/or repair of Fe-S clusters in biosynthetic enzymes. This Cronobacter sakazakii (strain ATCC BAA-894) (Enterobacter sakazakii) protein is Probable Fe(2+)-trafficking protein.